We begin with the raw amino-acid sequence, 87 residues long: Small ribosomal subunit protein uS17 (87 aa).

The protein belongs to the universal ribosomal protein uS17 family. In terms of assembly, part of the 30S ribosomal subunit.

Its function is as follows. One of the primary rRNA binding proteins, it binds specifically to the 5'-end of 16S ribosomal RNA. This is Small ribosomal subunit protein uS17 from Syntrophobacter fumaroxidans (strain DSM 10017 / MPOB).